A 661-amino-acid chain; its full sequence is UvrABC system protein B (661 aa).

A Helicase ATP-binding domain is found at 23 to 180; sequence EGLQKGYRIQ…THLARIGYER (158 aa). 36 to 43 contributes to the ATP binding site; the sequence is GVTGSGKT. Positions 89–112 match the Beta-hairpin motif; it reads YYDYYQPEAYIPTRDLYIEKNADI. The Helicase C-terminal domain occupies 426–592; it reads QIDDLVNEIA…TIIKPLDEEI (167 aa). In terms of domain architecture, UVR spans 620–655; that stretch reads EEYIALLEEEMYKAASELRYEDAARLRDELFNIREK.

The protein belongs to the UvrB family. In terms of assembly, forms a heterotetramer with UvrA during the search for lesions. Interacts with UvrC in an incision complex.

Its subcellular location is the cytoplasm. In terms of biological role, the UvrABC repair system catalyzes the recognition and processing of DNA lesions. A damage recognition complex composed of 2 UvrA and 2 UvrB subunits scans DNA for abnormalities. Upon binding of the UvrA(2)B(2) complex to a putative damaged site, the DNA wraps around one UvrB monomer. DNA wrap is dependent on ATP binding by UvrB and probably causes local melting of the DNA helix, facilitating insertion of UvrB beta-hairpin between the DNA strands. Then UvrB probes one DNA strand for the presence of a lesion. If a lesion is found the UvrA subunits dissociate and the UvrB-DNA preincision complex is formed. This complex is subsequently bound by UvrC and the second UvrB is released. If no lesion is found, the DNA wraps around the other UvrB subunit that will check the other stand for damage. This Thermosipho africanus (strain TCF52B) protein is UvrABC system protein B.